Here is a 334-residue protein sequence, read N- to C-terminus: Zinc finger Ran-binding domain-containing protein 2 (334 aa).

2 consecutive RanBP2-type zinc fingers follow at residues 9–40 (SDGDWICPDKKCGNVNFARRTSCNRCGREKTT) and 65–94 (SANDWQCKTCGNVNWARRSECNMCNTPKYA). The interval 117–334 (REESDGEYDE…SGSRTSSKKK (218 aa)) is disordered. Positions 150-163 (DKESEGEDEEDEDG) are enriched in acidic residues. Residues 196 to 212 (KKKKSNRRSRSKSRSSH) are compositionally biased toward basic residues. Composition is skewed to low complexity over residues 213 to 224 (SRSSSRSSSHSS) and 258 to 285 (SRSSSRSYRGSSTPRKRSYSSSRSSSSP). Positions 302 to 318 (RKKRRSRSRSPERRRRS) are enriched in basic residues. Positions 319 to 334 (SSGSSHSGSRTSSKKK) are enriched in low complexity.

The protein belongs to the ZRANB2 family.

Its subcellular location is the nucleus. Functionally, may regulate alternative splicing by interfering with constitutive 5'-splice site selection. The chain is Zinc finger Ran-binding domain-containing protein 2 from Gallus gallus (Chicken).